The primary structure comprises 414 residues: Sarcosine oxidase subunit beta (414 aa).

6 residues coordinate FAD: Gly42, His43, Glu64, Asn72, Thr77, and Ile79. His183 carries the tele-8alpha-FMN histidine modification. Residues Val207, Gly364, Gly367, and Lys369 each coordinate FAD.

This sequence belongs to the SoxB family. In terms of assembly, heterotetramer composed of subunits alpha (SoxA), beta (SoxB), gamma (SoxG) and delta (SoxD). It depends on FAD as a cofactor. The cofactor is FMN.

It localises to the cytoplasm. It catalyses the reaction sarcosine + (6S)-5,6,7,8-tetrahydrofolate + O2 = (6R)-5,10-methylene-5,6,7,8-tetrahydrofolate + glycine + H2O2. The catalysed reaction is sarcosine + O2 + H2O = formaldehyde + glycine + H2O2. In terms of biological role, in the presence of tetrahydrofolate, catalyzes the oxidative demethylation of sarcosine to yield glycine, 5,10-methylenetetrahydrofolate and hydrogen peroxide. In the absence of tetrahydrofolate, catalyzes the oxidative demethylation of sarcosine to yield glycine, formaldehyde and hydrogen peroxide. The polypeptide is Sarcosine oxidase subunit beta (soxB) (Rhodobacter capsulatus (strain ATCC BAA-309 / NBRC 16581 / SB1003)).